The sequence spans 656 residues: Chaperone protein DnaK (656 aa).

The span at 590–605 (GGAAGGAAGGAAGGAA) shows a compositional bias: gly residues. A disordered region spans residues 590 to 656 (GGAAGGAAGG…DGQPKPGPAA (67 aa)). The segment covering 606 to 621 (GDAAGAAGDSTGDAAG) has biased composition (low complexity). Over residues 622–635 (AAGGPSEGPAGDAG) the composition is skewed to gly residues.

It belongs to the heat shock protein 70 family.

Acts as a chaperone. This chain is Chaperone protein DnaK, found in Cenarchaeum symbiosum (strain A).